Reading from the N-terminus, the 160-residue chain is Ribosomal RNA large subunit methyltransferase H (160 aa).

The S-adenosyl-L-methionine site is built by Leu76 and Gly108.

Belongs to the RNA methyltransferase RlmH family. In terms of assembly, homodimer.

It is found in the cytoplasm. The enzyme catalyses pseudouridine(1915) in 23S rRNA + S-adenosyl-L-methionine = N(3)-methylpseudouridine(1915) in 23S rRNA + S-adenosyl-L-homocysteine + H(+). Functionally, specifically methylates the pseudouridine at position 1915 (m3Psi1915) in 23S rRNA. The protein is Ribosomal RNA large subunit methyltransferase H of Nitrobacter winogradskyi (strain ATCC 25391 / DSM 10237 / CIP 104748 / NCIMB 11846 / Nb-255).